The following is a 113-amino-acid chain: Large ribosomal subunit protein eL36z (113 aa).

A compositionally biased stretch (basic residues) spans 78-88; sequence RKLGTHKRAKR. The tract at residues 78–113 is disordered; sequence RKLGTHKRAKRKREEMSSVLRKMRSLGGAAAAEKKM.

The protein belongs to the eukaryotic ribosomal protein eL36 family.

The polypeptide is Large ribosomal subunit protein eL36z (RPL36A) (Arabidopsis thaliana (Mouse-ear cress)).